We begin with the raw amino-acid sequence, 34 residues long: N(4)-(Beta-N-acetylglucosaminyl)-L-asparaginase (34 aa).

The active-site Nucleophile is T18.

It belongs to the Ntn-hydrolase family. Heterotetramer of two alpha and two beta chains arranged as a dimer of alpha/beta heterodimers. In terms of processing, cleaved into an alpha and beta chain by autocatalysis; this activates the enzyme. The N-terminal residue of the beta subunit is responsible for the nucleophile hydrolase activity. Post-translationally, N-glycosylated.

Its subcellular location is the lysosome. The catalysed reaction is N(4)-(beta-N-acetyl-D-glucosaminyl)-L-asparagine + H2O = N-acetyl-beta-D-glucosaminylamine + L-aspartate + H(+). Its function is as follows. Cleaves the GlcNAc-Asn bond which joins oligosaccharides to the peptide of asparagine-linked glycoproteins. The protein is N(4)-(Beta-N-acetylglucosaminyl)-L-asparaginase (AGA) of Sus scrofa (Pig).